Here is a 33-residue protein sequence, read N- to C-terminus: GLLDSLKGFAATAGKGVLQSLLSTASCKLAKTC.

An intrachain disulfide couples Cys-27 to Cys-33.

The protein belongs to the frog skin active peptide (FSAP) family. Brevinin subfamily. As to expression, expressed by the skin glands.

Its subcellular location is the secreted. Its function is as follows. Shows antibacterial activity against representative Gram-negative and Gram-positive bacterial species, and a very high hemolytic activity. The protein is Brevinin-2 of Pelophylax porosus brevipodus (Nagoya Daruma pond frog).